We begin with the raw amino-acid sequence, 219 residues long: Transcription factor MYB23 (219 aa).

HTH myb-type domains are found at residues 9–61 and 62–116; these read EHEY…MNYL and SPNV…SKKL. 2 consecutive DNA-binding regions (H-T-H motif) follow at residues 37–61 and 89–112; these read WNRI…MNYL and WSLI…NTHL.

In terms of assembly, interacts with BHLH2/EGL3/MYC146, BHLH12/MYC1 and GL3. Expressed in roots, seed coats, leaves, stems and flowers. Detected specifically in trichomes, and in the cell division and differentiation zone of the root.

It localises to the nucleus. Functionally, transcription activator, when associated with BHLH2/EGL3/MYC146 or BHLH12/MYC1. Regulates the epidermal cell fate specification. Mediates the formation of columellae and accumulation of mucilages on seed coats. Controls the elongation of epidermal cells positively in roots but negatively in stems, leading to the promotion of primary roots elongation and repression of leaves and stems elongation, respectively. Ovoids ectopic root-hair formation, probably by inducing GL2 in roots. Controls trichome initiation and branching. In Arabidopsis thaliana (Mouse-ear cress), this protein is Transcription factor MYB23 (MYB23).